Here is a 485-residue protein sequence, read N- to C-terminus: Maturase K (485 aa).

Belongs to the intron maturase 2 family. MatK subfamily.

The protein localises to the plastid. It localises to the chloroplast. Functionally, usually encoded in the trnK tRNA gene intron. Probably assists in splicing its own and other chloroplast group II introns. This Malus domestica (Apple) protein is Maturase K.